We begin with the raw amino-acid sequence, 911 residues long: Protein translocase subunit SecA (911 aa).

ATP contacts are provided by residues glutamine 87, 105-109 (GEGKT), and aspartate 510. 4 residues coordinate Zn(2+): cysteine 896, cysteine 898, cysteine 907, and histidine 908.

It belongs to the SecA family. In terms of assembly, monomer and homodimer. Part of the essential Sec protein translocation apparatus which comprises SecA, SecYEG and auxiliary proteins SecDF-YajC and YidC. The cofactor is Zn(2+).

Its subcellular location is the cell inner membrane. It localises to the cytoplasm. It carries out the reaction ATP + H2O + cellular proteinSide 1 = ADP + phosphate + cellular proteinSide 2.. Part of the Sec protein translocase complex. Interacts with the SecYEG preprotein conducting channel. Has a central role in coupling the hydrolysis of ATP to the transfer of proteins into and across the cell membrane, serving both as a receptor for the preprotein-SecB complex and as an ATP-driven molecular motor driving the stepwise translocation of polypeptide chains across the membrane. The sequence is that of Protein translocase subunit SecA from Acinetobacter baumannii (strain SDF).